The following is a 106-amino-acid chain: MVIKVFLASSSSSVTIKKRQQEVLQFLEANRIEYEEVDITMLEEKRQWMYKNIPKDRLPEQGNPLPPQIFNDNIYCGDYESFFESKESNTVFLFLQLKSRPAQKEL.

Residues 61-67 (QGNPLPP) carry the SH3-binding motif.

Belongs to the SH3BGR family.

The protein localises to the nucleus. The sequence is that of SH3 domain-binding glutamic acid-rich-like protein 2 (sh3bgrl2) from Xenopus tropicalis (Western clawed frog).